Reading from the N-terminus, the 168-residue chain is G/U mismatch-specific DNA glycosylase (168 aa).

The protein belongs to the uracil-DNA glycosylase (UDG) superfamily. TDG/mug family. In terms of assembly, binds DNA as a monomer.

The protein localises to the cytoplasm. It catalyses the reaction Specifically hydrolyzes mismatched double-stranded DNA and polynucleotides, releasing free uracil.. Excises ethenocytosine and uracil, which can arise by alkylation or deamination of cytosine, respectively, from the corresponding mispairs with guanine in ds-DNA. It is capable of hydrolyzing the carbon-nitrogen bond between the sugar-phosphate backbone of the DNA and the mispaired base. The complementary strand guanine functions in substrate recognition. Required for DNA damage lesion repair in stationary-phase cells. The chain is G/U mismatch-specific DNA glycosylase from Shigella dysenteriae serotype 1 (strain Sd197).